A 231-amino-acid chain; its full sequence is MRKTRLWGLLWMFFVSELLAATKLTEEKYELKEGQTLDVKCDYMLEKFASSRKAWQIIRDGEMPQTLACTERPSHPVQVGRIILEDYHDHGLLHVRMTNLQVEDSGLYQCVIYQPPKEPHVLFDRIRLVVTKGSSGTPGSSENSTPNVYKTPPTTTKALRPLYTSPTTVTQAPPKSTADVSTPDSEINLTNVTDIIRVPVFNIAILVAGGFLSKSLVFSVLFAVTLRSFVP.

Residues methionine 1–alanine 20 form the signal peptide. Residues alanine 21–asparagine 202 lie on the Extracellular side of the membrane. Residues glutamate 26–threonine 131 enclose the Ig-like V-type domain. Cysteine 41 and cysteine 110 are joined by a disulfide. 2 stretches are compositionally biased toward polar residues: residues serine 134 to lysine 157 and threonine 164 to threonine 182. The segment at serine 134–threonine 182 is disordered. Residues asparagine 188 and asparagine 191 are each glycosylated (N-linked (GlcNAc...) asparagine). A helical transmembrane segment spans residues isoleucine 203 to alanine 223. The Cytoplasmic segment spans residues valine 224–proline 231.

Monomer. Homomultimer; when activated. Interacts with TYROBP/DAP12. Interacts with TLR4.

It localises to the cell membrane. Cell surface receptor that plays important roles in innate and adaptive immunity by amplifying inflammatory responses. Upon activation by various ligands such as PGLYRP1, HMGB1 or HSP70, multimerizes and forms a complex with transmembrane adapter TYROBP/DAP12. In turn, initiates a SYK-mediated cascade of tyrosine phosphorylation, activating multiple downstream mediators such as BTK, MAPK1, MAPK3 or phospholipase C-gamma. This cascade promotes the neutrophil- and macrophage-mediated release of pro-inflammatory cytokines and/or chemokines, as well as their migration and thereby amplifies inflammatory responses that are triggered by bacterial and fungal infections. By also promoting the amplification of inflammatory signals that are initially triggered by Toll-like receptor (TLR) and NOD-like receptor engagement, plays a major role in the pathophysiology of acute and chronic inflammatory diseases of different etiologies including septic shock and atherosclerosis. This Pongo abelii (Sumatran orangutan) protein is Triggering receptor expressed on myeloid cells 1 (TREM1).